A 237-amino-acid chain; its full sequence is Phosphoribosylaminoimidazole-succinocarboxamide synthase (237 aa).

It belongs to the SAICAR synthetase family.

It catalyses the reaction 5-amino-1-(5-phospho-D-ribosyl)imidazole-4-carboxylate + L-aspartate + ATP = (2S)-2-[5-amino-1-(5-phospho-beta-D-ribosyl)imidazole-4-carboxamido]succinate + ADP + phosphate + 2 H(+). It functions in the pathway purine metabolism; IMP biosynthesis via de novo pathway; 5-amino-1-(5-phospho-D-ribosyl)imidazole-4-carboxamide from 5-amino-1-(5-phospho-D-ribosyl)imidazole-4-carboxylate: step 1/2. This Shigella dysenteriae serotype 1 (strain Sd197) protein is Phosphoribosylaminoimidazole-succinocarboxamide synthase.